The sequence spans 128 residues: ADA histone acetyltransferase complex component 2 (128 aa).

It localises to the cytoplasm. Its subcellular location is the nucleus. The chain is ADA histone acetyltransferase complex component 2 (AHC2) from Saccharomyces cerevisiae (strain ATCC 204508 / S288c) (Baker's yeast).